The sequence spans 651 residues: Probable potassium transport system protein Kup (651 aa).

Helical transmembrane passes span 41–61 (LVLG…IYAF), 82–102 (VVSL…VLFV), 130–150 (LILG…VITP), 163–183 (IVAP…LVTL), 194–214 (VAIV…ASGL), 235–255 (FLTV…LAMT), 276–296 (WLWI…AFIL), 309–329 (MIPS…TVIA), 366–386 (IYIP…VLGF), 395–415 (AYGI…YIVM), 426–446 (ALPI…ANII), and 450–470 (EGGW…WTWV).

It belongs to the HAK/KUP transporter (TC 2.A.72) family.

The protein resides in the cell inner membrane. It catalyses the reaction K(+)(in) + H(+)(in) = K(+)(out) + H(+)(out). In terms of biological role, transport of potassium into the cell. Likely operates as a K(+):H(+) symporter. In Brucella melitensis biotype 2 (strain ATCC 23457), this protein is Probable potassium transport system protein Kup.